Here is a 213-residue protein sequence, read N- to C-terminus: Uridine kinase (213 aa).

Glycine 15–serine 22 provides a ligand contact to ATP.

The protein belongs to the uridine kinase family.

Its subcellular location is the cytoplasm. The catalysed reaction is uridine + ATP = UMP + ADP + H(+). It carries out the reaction cytidine + ATP = CMP + ADP + H(+). The protein operates within pyrimidine metabolism; CTP biosynthesis via salvage pathway; CTP from cytidine: step 1/3. It functions in the pathway pyrimidine metabolism; UMP biosynthesis via salvage pathway; UMP from uridine: step 1/1. In Yersinia enterocolitica serotype O:8 / biotype 1B (strain NCTC 13174 / 8081), this protein is Uridine kinase.